The primary structure comprises 1117 residues: Sodium-driven chloride bicarbonate exchanger (1117 aa).

Residues 1–14 (MQSGTCESFQSLSH) are compositionally biased toward polar residues. Disordered regions lie at residues 1-26 (MQSG…VDRG), 57-94 (GRKS…FDTP), 244-312 (KQSE…PHQQ), and 456-475 (NGTA…GPEL). Topologically, residues 1–508 (MQSGTCESFQ…DFTDALSLQC (508 aa)) are cytoplasmic. A compositionally biased stretch (basic and acidic residues) spans 15-26 (QRNDEEAVVDRG). The span at 58–75 (RKSHRRHRHRGHKHRKRD) shows a compositional bias: basic residues. The span at 76 to 89 (RERDSGLEDGRESP) shows a compositional bias: basic and acidic residues. S88 is subject to Phosphoserine. A Phosphothreonine modification is found at T93. The segment covering 247–263 (EPNSMDKNAGQVVSPQS) has biased composition (polar residues). A Phosphoserine modification is found at S275. Residues 509–529 (LASFLFLYCACMSPVITFGGL) form a helical membrane-spanning segment. Over 530 to 537 (LGEATEGR) the chain is Extracellular. A helical transmembrane segment spans residues 538-558 (ISAIESLFGASMTGIAYSLFG). Over 559–561 (GQP) the chain is Cytoplasmic. The chain crosses the membrane as a helical span at residues 562-582 (LTILGSTGPVLVFEKILFKFC). Topologically, residues 583 to 595 (KEYGLSYLSLRAS) are extracellular. The chain crosses the membrane as a helical span at residues 596-616 (IGLWTATLCIILVATDASSLV). The Cytoplasmic segment spans residues 617-625 (CYITRFTEE). A helical transmembrane segment spans residues 626–646 (AFASLICIIFIYEALEKLFEL). The Extracellular portion of the chain corresponds to 647 to 719 (SEAYPINMHN…VGRACGHEHP (73 aa)). 4 N-linked (GlcNAc...) asparagine glycosylation sites follow: N673, N676, N686, and N696. A helical membrane pass occupies residues 720–740 (YVPDVLFWSVILFFSTVTLSA). Residues 741 to 761 (TLKQFKTSRYFPTKVRSIVSD) lie on the Cytoplasmic side of the membrane. A helical transmembrane segment spans residues 762–782 (FAVFLTILCMVLIDYAIGIPS). Residues 783 to 808 (PKLQVPSVFKPTRDDRGWFVTPLGPN) are Extracellular-facing. The chain crosses the membrane as a helical span at residues 809–829 (PWWTVIAAIIPALLCTILIFM). At 830-854 (DQQITAVIINRKEHKLKKGCGYHLD) the chain is on the cytoplasmic side. The helical transmembrane segment at 855 to 875 (LLMVAVMLGVCSIMGLPWFVA) threads the bilayer. At 876 to 911 (ATVLSITHVNSLKLESECSAPGEQPKFLGIREQRVT) the chain is on the extracellular side. A helical membrane pass occupies residues 912–932 (GLMIFILMGSSVFMTSILKFI). Residues 933 to 934 (PM) lie on the Cytoplasmic side of the membrane. Residues 935–955 (PVLYGVFLYMGASSLKGIQFF) traverse the membrane as a helical segment. The Extracellular segment spans residues 956–997 (DRIKLFWMPAKHQPDFIYLRHVPLRKVHLFTVIQMSCLGLLW). Residues 998-1018 (IIKVSRAAIVFPMMVLALVFV) traverse the membrane as a helical segment. The Cytoplasmic segment spans residues 1019–1117 (RKLMDFLFTK…SSFPSKSSPS (99 aa)). 2 positions are modified to phosphoserine: S1056 and S1084.

The protein belongs to the anion exchanger (TC 2.A.31) family. In terms of processing, N-glycosylated.

It localises to the basolateral cell membrane. Its subcellular location is the apical cell membrane. It is found in the cell projection. The protein resides in the dendrite. The protein localises to the axon. It localises to the perikaryon. Its subcellular location is the presynapse. It is found in the postsynapse. Functionally, sodium/bicarbonate cotransporter which plays an important role in regulating intracellular pH. Has been shown to act as a sodium/bicarbonate cotransporter in exchange for intracellular chloride. Has also been shown to act as a sodium/biocarbonate cotransporter which does not couple net influx of bicarbonate to net efflux of chloride, with the observed chloride efflux being due to chloride self-exchange. Controls neuronal pH and may contribute to the secretion of cerebrospinal fluid. Acting on presynaptic intracellular pH, it promotes GABA release, reduces the excitability of CA1 pyramidal neurons, and modulates short-term synaptic plasticity. Required in retinal cells to maintain normal pH which is necessary for normal vision. In the kidney, likely to mediate bicarbonate reclamation in the apical membrane of the proximal tubules. The sequence is that of Sodium-driven chloride bicarbonate exchanger from Bos taurus (Bovine).